The chain runs to 299 residues: Oxygen-dependent coproporphyrinogen-III oxidase (299 aa).

Ser92 contacts substrate. A divalent metal cation-binding residues include His96 and His106. The active-site Proton donor is the His106. 108–110 contacts substrate; it reads NVR. Residues His145 and His175 each coordinate a divalent metal cation. The tract at residues 239-274 is important for dimerization; the sequence is YVEFNLVYDRGTLFGLQSGGRAESILMSLPPRVRWE. 257 to 259 is a binding site for substrate; sequence GGR.

Belongs to the aerobic coproporphyrinogen-III oxidase family. In terms of assembly, homodimer. A divalent metal cation serves as cofactor.

The protein resides in the cytoplasm. It catalyses the reaction coproporphyrinogen III + O2 + 2 H(+) = protoporphyrinogen IX + 2 CO2 + 2 H2O. It participates in porphyrin-containing compound metabolism; protoporphyrin-IX biosynthesis; protoporphyrinogen-IX from coproporphyrinogen-III (O2 route): step 1/1. Its function is as follows. Involved in the heme biosynthesis. Catalyzes the aerobic oxidative decarboxylation of propionate groups of rings A and B of coproporphyrinogen-III to yield the vinyl groups in protoporphyrinogen-IX. In Xanthomonas euvesicatoria pv. vesicatoria (strain 85-10) (Xanthomonas campestris pv. vesicatoria), this protein is Oxygen-dependent coproporphyrinogen-III oxidase.